A 270-amino-acid chain; its full sequence is tRNA pseudouridine synthase A (270 aa).

Catalysis depends on aspartate 60, which acts as the Nucleophile. A substrate-binding site is contributed by tyrosine 118.

It belongs to the tRNA pseudouridine synthase TruA family. As to quaternary structure, homodimer.

The catalysed reaction is uridine(38/39/40) in tRNA = pseudouridine(38/39/40) in tRNA. Formation of pseudouridine at positions 38, 39 and 40 in the anticodon stem and loop of transfer RNAs. This is tRNA pseudouridine synthase A from Cronobacter sakazakii (strain ATCC BAA-894) (Enterobacter sakazakii).